Consider the following 185-residue polypeptide: Protein-arginine kinase activator protein (185 aa).

Phosphoarginine occurs at positions 115 and 169. The region spanning 139–174 (RRQIDMLKKELESLIHQEEFENAAHVRDQIRLLEQS) is the UVR domain.

As to quaternary structure, interacts with McsB. Post-translationally, phosphorylated on Arg residues by McsB.

Functionally, activates the phosphorylation activity of the protein-arginine kinase McsB. Is required for the delocalization of competence proteins from the cell poles. In Bacillus subtilis (strain 168), this protein is Protein-arginine kinase activator protein (mcsA).